The chain runs to 811 residues: DNA mismatch repair protein MutS (811 aa).

An ATP-binding site is contributed by 583–590 (GPNMAGKS).

Belongs to the DNA mismatch repair MutS family.

This protein is involved in the repair of mismatches in DNA. It is possible that it carries out the mismatch recognition step. This protein has a weak ATPase activity. The chain is DNA mismatch repair protein MutS from Thermus thermophilus (strain ATCC BAA-163 / DSM 7039 / HB27).